The chain runs to 430 residues: Adenylosuccinate synthetase (430 aa).

Residues 12–18 (GDEGKGK) and 40–42 (GHT) each bind GTP. Aspartate 13 (proton acceptor) is an active-site residue. Residues aspartate 13 and glycine 40 each contribute to the Mg(2+) site. IMP contacts are provided by residues 13–16 (DEGK), 38–41 (NAGH), threonine 130, arginine 144, glutamine 224, threonine 239, and arginine 303. Catalysis depends on histidine 41, which acts as the Proton donor. 299-305 (VNTGRKR) contributes to the substrate binding site. GTP contacts are provided by residues arginine 305, 331-333 (KLD), and 413-415 (STS).

Belongs to the adenylosuccinate synthetase family. As to quaternary structure, homodimer. Requires Mg(2+) as cofactor.

Its subcellular location is the cytoplasm. It carries out the reaction IMP + L-aspartate + GTP = N(6)-(1,2-dicarboxyethyl)-AMP + GDP + phosphate + 2 H(+). The protein operates within purine metabolism; AMP biosynthesis via de novo pathway; AMP from IMP: step 1/2. Functionally, plays an important role in the de novo pathway of purine nucleotide biosynthesis. Catalyzes the first committed step in the biosynthesis of AMP from IMP. This Rhodopseudomonas palustris (strain ATCC BAA-98 / CGA009) protein is Adenylosuccinate synthetase.